The following is a 362-amino-acid chain: Dihydroorotate dehydrogenase (quinone) (362 aa).

Residues 62–66 (AGYDK) and Thr-86 each bind FMN. Substrate is bound at residue Lys-66. Residue 111 to 115 (NRLGF) coordinates substrate. The FMN site is built by Asn-139 and Asn-170. Residue Asn-170 coordinates substrate. Ser-173 (nucleophile) is an active-site residue. Asn-175 serves as a coordination point for substrate. 2 residues coordinate FMN: Lys-215 and Ser-243. 244–245 (NT) contacts substrate. FMN-binding positions include Gly-266, Gly-295, and 316-317 (YS).

This sequence belongs to the dihydroorotate dehydrogenase family. Type 2 subfamily. In terms of assembly, monomer. FMN serves as cofactor.

It localises to the cell membrane. The catalysed reaction is (S)-dihydroorotate + a quinone = orotate + a quinol. It functions in the pathway pyrimidine metabolism; UMP biosynthesis via de novo pathway; orotate from (S)-dihydroorotate (quinone route): step 1/1. Functionally, catalyzes the conversion of dihydroorotate to orotate with quinone as electron acceptor. This chain is Dihydroorotate dehydrogenase (quinone), found in Rhizobium meliloti (strain 1021) (Ensifer meliloti).